A 399-amino-acid chain; its full sequence is Succinate--CoA ligase [ADP-forming] subunit beta (399 aa).

In terms of domain architecture, ATP-grasp spans 9-254 (KELLAKYGVG…ETEEDPAEIE (246 aa)). ATP is bound by residues K46, 53–55 (GRG), V112, and E117. Residues N209 and D223 each coordinate Mg(2+). Residues N274 and 331–333 (GIM) each bind substrate.

This sequence belongs to the succinate/malate CoA ligase beta subunit family. As to quaternary structure, heterotetramer of two alpha and two beta subunits. Mg(2+) is required as a cofactor.

It catalyses the reaction succinate + ATP + CoA = succinyl-CoA + ADP + phosphate. The enzyme catalyses GTP + succinate + CoA = succinyl-CoA + GDP + phosphate. It functions in the pathway carbohydrate metabolism; tricarboxylic acid cycle; succinate from succinyl-CoA (ligase route): step 1/1. Succinyl-CoA synthetase functions in the citric acid cycle (TCA), coupling the hydrolysis of succinyl-CoA to the synthesis of either ATP or GTP and thus represents the only step of substrate-level phosphorylation in the TCA. The beta subunit provides nucleotide specificity of the enzyme and binds the substrate succinate, while the binding sites for coenzyme A and phosphate are found in the alpha subunit. The chain is Succinate--CoA ligase [ADP-forming] subunit beta from Novosphingobium aromaticivorans (strain ATCC 700278 / DSM 12444 / CCUG 56034 / CIP 105152 / NBRC 16084 / F199).